The chain runs to 349 residues: Small ribosomal subunit protein uS2 (349 aa).

This sequence belongs to the universal ribosomal protein uS2 family.

This is Small ribosomal subunit protein uS2 from Methylobacterium nodulans (strain LMG 21967 / CNCM I-2342 / ORS 2060).